The primary structure comprises 469 residues: Cytosolic beta-glucosidase (469 aa).

Residues Gln-17, His-120, and Asn-164 each coordinate substrate. Glu-165 (proton donor) is an active-site residue. Tyr-309 serves as a coordination point for substrate. Glu-373 acts as the Nucleophile in catalysis. Residues Trp-417 and 424–425 (EW) each bind substrate.

This sequence belongs to the glycosyl hydrolase 1 family. Klotho subfamily. Post-translationally, the N-terminus is blocked. As to expression, present in hepatocytes (at protein level).

Its subcellular location is the cytoplasm. It is found in the cytosol. It carries out the reaction Hydrolysis of terminal, non-reducing beta-D-glucosyl residues with release of beta-D-glucose.. It catalyses the reaction a beta-D-glucosyl-(1&lt;-&gt;1')-N-acylsphing-4-enine + H2O = an N-acylsphing-4-enine + D-glucose. The catalysed reaction is a beta-D-galactosyl-(1&lt;-&gt;1')-N-acylsphing-4-enine + H2O = an N-acylsphing-4-enine + D-galactose. The enzyme catalyses beta-D-glucosyl-(1&lt;-&gt;1)-sphing-4-enine + H2O = sphing-4-enine + D-glucose. It carries out the reaction beta-D-glucosyl-(1&lt;-&gt;1)-N-octadecanoylsphing-4-enine + H2O = N-octadecanoylsphing-4-enine + D-glucose. It catalyses the reaction beta-D-galactosyl-(1&lt;-&gt;1)-sphing-4-enine + H2O = sphing-4-enine + D-galactose. The catalysed reaction is beta-D-galactosyl-(1&lt;-&gt;1')-N-octadecanoylsphing-4-enine + H2O = N-octadecanoylsphing-4-enine + D-galactose. The enzyme catalyses a beta-D-xylosyl-(1&lt;-&gt;1')-N-acylsphing-4-enine + cholesterol = cholesteryl 3-beta-D-xyloside + an N-acylsphing-4-enine. Inhibited by 2,4-dinitrophenyl-2-fluoro-2-deoxy-beta-D-glucopyranoside. Its function is as follows. Neutral cytosolic beta-glycosidase with a broad substrate specificity that could play a role in the catabolism of glycosylceramides. Has a significant glucosylceramidase activity in vitro. However, that activity is relatively low and its significance in vivo is not clear. Hydrolyzes galactosylceramide/GalCer, glucosylsphingosine/GlcSph and galactosylsphingosine/GalSph. However, the in vivo relevance of these activities is unclear. It can also hydrolyze a broad variety of dietary glycosides including phytoestrogens, flavonols, flavones, flavanones and cyanogens in vitro and could therefore play a role in the metabolism of xenobiotics. Possesses transxylosylase activity in vitro using xylosylated ceramides/XylCers (such as beta-D-xylosyl-(1&lt;-&gt;1')-N-acylsphing-4-enine) as xylosyl donors and cholesterol as acceptor. Could also play a role in the catabolism of cytosolic sialyl free N-glycans. In Cavia porcellus (Guinea pig), this protein is Cytosolic beta-glucosidase.